A 397-amino-acid polypeptide reads, in one-letter code: Subtilisin-like serine protease Pen ch 13.0101 (397 aa).

The signal sequence occupies residues 1 to 19; the sequence is MGFLKVLATSLATLAVVDA. The propeptide at 20-115 is removed in mature form; it reads GTLLTASNTD…IEPDMIVNAT (96 aa). The region spanning 35–113 is the Inhibitor I9 domain; the sequence is SYIVVMNDDV…KYIEPDMIVN (79 aa). The N-linked (GlcNAc...) asparagine glycan is linked to N113. A Peptidase S8 domain is found at 125-397; that stretch reads SWGLARISSK…SKLLYNGINV (273 aa). Active-site charge relay system residues include D157 and H188. 2 N-linked (GlcNAc...) asparagine glycosylation sites follow: N249 and N284. The Charge relay system role is filled by S343.

This sequence belongs to the peptidase S8 family.

Its subcellular location is the secreted. Its function is as follows. Serine protease. The protein is Subtilisin-like serine protease Pen ch 13.0101 of Penicillium rubens.